Reading from the N-terminus, the 493-residue chain is Sodium-coupled neutral amino acid symporter 2 (493 aa).

Residues 1–72 (MNNAEVLNVA…LPGTTSFGMS (72 aa)) lie on the Cytoplasmic side of the membrane. Residues 1-92 (MNNAEVLNVA…SGILGLSYAM (92 aa)) are regulates protein turnover upon amino acid deprivation. A helical membrane pass occupies residues 73–92 (VFNLSNAIVGSGILGLSYAM). Asn78 contributes to the Na(+) binding site. At 93–98 (ANTGIA) the chain is on the extracellular side. The chain crosses the membrane as a helical span at residues 99-119 (LFMILLVFVTVFSLYSIHLLL). Residues 120-154 (KTANEGGSLLYEQLGLKAFGIPGKLAASGSVTLQN) lie on the Cytoplasmic side of the membrane. The chain crosses the membrane as a helical span at residues 155-173 (IGAMSSYLYIVKYELPLVI). The Extracellular portion of the chain corresponds to 174 to 184 (KALMDIKESNG). A helical transmembrane segment spans residues 185–205 (EWYLNGDYLVIMVSLAIILPL). The Cytoplasmic segment spans residues 206–213 (SLLRNLGY). A helical transmembrane segment spans residues 214–234 (LGYTSGFSPLCMVFFLIVVIY). The Extracellular segment spans residues 235–279 (KKFEIPCPLEAMNMTSNSSSHDHMAHNETDDEMCKPKYFVFNSQT). Cysteines 241 and 268 form a disulfide. N-linked (GlcNAc...) asparagine glycans are attached at residues Asn247, Asn251, and Asn261. The helical transmembrane segment at 280–300 (VYAVPILTFSFVCHPAVLPIY) threads the bilayer. Topologically, residues 301–316 (QELKGRSRRRMMNVSN) are cytoplasmic. A helical transmembrane segment spans residues 317 to 337 (VSFFAMFIMYLLAALFGYLTF). Topologically, residues 338–358 (YSKVEPELLHTYSKVFGAGVI) are extracellular. The helical transmembrane segment at 359-379 (FVVVRLAVLMAVTLTVPIVIF) threads the bilayer. Residue Thr373 participates in Na(+) binding. The Cytoplasmic segment spans residues 380 to 400 (PIRSSLNELFCSGKDFAWIRH). A helical transmembrane segment spans residues 401-421 (ILITFLILAFTNVLVIFVPTI). Over 422-423 (RD) the chain is Extracellular. The chain crosses the membrane as a helical span at residues 424-444 (IFGFIGASAAAMLVFILPSAF). Over 445 to 459 (YIRLVKKESMKSVQK) the chain is Cytoplasmic. The helical transmembrane segment at 460 to 482 (IGALLFLIGGIIVMIGSMTLIIL) threads the bilayer. The Extracellular portion of the chain corresponds to 483-493 (DWIHNSTSGGN).

The protein belongs to the amino acid/polyamine transporter 2 family.

The protein localises to the cell membrane. The enzyme catalyses L-alanine(in) + Na(+)(in) = L-alanine(out) + Na(+)(out). It catalyses the reaction glycine(in) + Na(+)(in) = glycine(out) + Na(+)(out). The catalysed reaction is L-serine(in) + Na(+)(in) = L-serine(out) + Na(+)(out). It carries out the reaction L-proline(in) + Na(+)(in) = L-proline(out) + Na(+)(out). The enzyme catalyses L-methionine(in) + Na(+)(in) = L-methionine(out) + Na(+)(out). It catalyses the reaction L-histidine(in) + Na(+)(in) = L-histidine(out) + Na(+)(out). The catalysed reaction is L-asparagine(in) + Na(+)(in) = L-asparagine(out) + Na(+)(out). It carries out the reaction L-glutamine(in) + Na(+)(in) = L-glutamine(out) + Na(+)(out). The enzyme catalyses L-threonine(in) + Na(+)(in) = L-threonine(out) + Na(+)(out). It catalyses the reaction L-leucine(in) + Na(+)(in) = L-leucine(out) + Na(+)(out). The catalysed reaction is L-phenylalanine(in) + Na(+)(in) = L-phenylalanine(out) + Na(+)(out). Inhibited by N-methyl-D-glucamine. Inhibited by choline. Allosteric regulation of sodium ions binding by pH. Functionally, symporter that cotransports neutral amino acids and sodium ions from the extracellular to the intracellular side of the cell membrane. The transport is pH-sensitive, Li(+)-intolerant, electrogenic, driven by the Na(+) electrochemical gradient and cotransports of neutral amino acids and sodium ions with a stoichiometry of 1:1. The protein is Sodium-coupled neutral amino acid symporter 2 of Xenopus tropicalis (Western clawed frog).